The chain runs to 435 residues: Legumain (435 aa).

Positions 1 to 17 (MTWRVAVLLSLVLGAGA) are cleaved as a signal peptide. N-linked (GlcNAc...) asparagine glycosylation is present at asparagine 93. Residue histidine 150 is part of the active site. Asparagine 169 carries an N-linked (GlcNAc...) asparagine glycan. Residue cysteine 191 is the Nucleophile of the active site. N-linked (GlcNAc...) asparagine glycosylation is found at asparagine 215, asparagine 265, and asparagine 274. A propeptide spanning residues 326-435 (NMKESQVLVG…AMDKVCLSHY (110 aa)) is cleaved from the precursor. 2 disulfide bridges follow: cysteine 380–cysteine 414 and cysteine 392–cysteine 431.

This sequence belongs to the peptidase C13 family. As to quaternary structure, homodimer before autocatalytic removal of the propeptide. Monomer after autocatalytic processing. May interact with integrins. In terms of processing, activated by autocatalytic processing at pH 4. Detected in kidney cortex (at protein level).

Its subcellular location is the lysosome. It catalyses the reaction Hydrolysis of proteins and small molecule substrates at -Asn-|-Xaa- bonds.. Functionally, has a strict specificity for hydrolysis of asparaginyl bonds. Can also cleave aspartyl bonds slowly, especially under acidic conditions. Involved in the processing of proteins for MHC class II antigen presentation in the lysosomal/endosomal system. Also involved in MHC class I antigen presentation in cross-presenting dendritic cells by mediating cleavage and maturation of Perforin-2 (MPEG1), thereby promoting antigen translocation in the cytosol. Required for normal lysosomal protein degradation in renal proximal tubules. Required for normal degradation of internalized EGFR. Plays a role in the regulation of cell proliferation via its role in EGFR degradation. The chain is Legumain (Lgmn) from Rattus norvegicus (Rat).